A 136-amino-acid polypeptide reads, in one-letter code: MSSDSFQRQLVQRTNTLNSSIDNATLTILSRFQDILDIAINEGKDKYTVAPEVYQIECHTVSMVRAVEQLLDVSRQIKSYWLTNSLSTSFPTVDYSEPDLEKVKRTLTKLQNHLLEVSLIEPEASETTEAPTVSDT.

It belongs to the Mediator complex subunit 22 family. Component of the Mediator complex.

The protein localises to the nucleus. Component of the Mediator complex, a coactivator involved in the regulated transcription of nearly all RNA polymerase II-dependent genes. Mediator functions as a bridge to convey information from gene-specific regulatory proteins to the basal RNA polymerase II transcription machinery. Mediator is recruited to promoters by direct interactions with regulatory proteins and serves as a scaffold for the assembly of a functional preinitiation complex with RNA polymerase II and the general transcription factors. The polypeptide is Mediator of RNA polymerase II transcription subunit 22 (med22) (Schizosaccharomyces pombe (strain 972 / ATCC 24843) (Fission yeast)).